Reading from the N-terminus, the 392-residue chain is Cell division protein DivIB (392 aa).

A disordered region spans residues 1-87 (MSEKDNNLTP…ETQSSEAPIE (87 aa)). Residues 1–131 (MSEKDNNLTP…KGSAPLLKKM (131 aa)) lie on the Cytoplasmic side of the membrane. Basic and acidic residues predominate over residues 14–32 (KHLEYQKRKAEEAKKEKKA). Residues 58–76 (TRDEAESAELLEEGFETNN) are compositionally biased toward acidic residues. A helical membrane pass occupies residues 132 to 152 (WPALAIVVLVFVGSLYLISPL). One can recognise a POTRA domain in the interval 153–224 (SKISTFSVSG…NRFEAIVKEH (72 aa)). Over 153-392 (SKISTFSVSG…TAQSTTTSSN (240 aa)) the chain is Extracellular. A disordered region spans residues 368–392 (ISAQNAKKTDASSENTAQSTTTSSN).

Belongs to the FtsQ/DivIB family. DivIB subfamily.

The protein localises to the cell membrane. In terms of biological role, cell division protein that may be involved in stabilizing or promoting the assembly of the division complex. This is Cell division protein DivIB from Lactococcus lactis subsp. lactis (strain IL1403) (Streptococcus lactis).